Reading from the N-terminus, the 152-residue chain is RDDFSSDDMKSDDESSQKEMKSSRGRTSSINEDEDLNPEQKVEREKERRMANNARERLRVRDINEAFKELGRMCQLHLKSEKPQTKLLILHQAVAVILNLEQQVRERNLNPKAACLKRREEEKVSAVSAEPPNTHPGVHPGLTDTTNPMGHM.

Disordered regions lie at residues 1 to 54 (RDDF…ANNA) and 123 to 152 (KVSA…MGHM). Basic and acidic residues-rich tracts occupy residues 7–22 (DDMK…EMKS) and 38–54 (PEQK…ANNA). Residues 47-100 (ERRMANNARERLRVRDINEAFKELGRMCQLHLKSEKPQTKLLILHQAVAVILNL) form the bHLH domain. Positions 102–125 (QQVRERNLNPKAACLKRREEEKVS) are class A specific domain. The span at 143–152 (TDTTNPMGHM) shows a compositional bias: polar residues.

As to quaternary structure, efficient DNA binding requires dimerization with another bHLH protein. Forms homo- or heterooligomers with myogenin, E12 and ITF2 proteins.

The protein resides in the nucleus. Functionally, transcriptional regulator. Involved in the initiation of neuronal differentiation. Activates transcription by binding to the E box-containing promoter. This is Transcription factor XE1.1 from Xenopus laevis (African clawed frog).